The chain runs to 114 residues: Replication initiation control protein YabA (114 aa).

His-79, Cys-81, Cys-95, and Cys-98 together coordinate Zn(2+).

This sequence belongs to the YabA family. In terms of assembly, homotetramer. Interacts with both DnaA and DnaN, acting as a bridge between these two proteins. The cofactor is Zn(2+).

Its subcellular location is the cytoplasm. The protein resides in the nucleoid. In terms of biological role, involved in control of chromosome replication initiation. Inhibits the cooperative binding of DnaA to the oriC region, thus negatively regulating initiation of chromosome replication. Inhibits the ability of DnaA-ATP to form a helix on DNA; does not disassemble preformed DnaA-DNA helices. Decreases the residence time of DnaA on the chromosome at its binding sites (oriC, replication forks and promoter-binding sites). Tethers DnaA to the replication machinery via the DNA polymerase beta sliding clamp subunit (dnaN). Associates with oriC and other DnaA targets on the chromosome in a DnaA-dependent manner. The sequence is that of Replication initiation control protein YabA from Lactobacillus johnsonii (strain CNCM I-12250 / La1 / NCC 533).